The primary structure comprises 251 residues: CDP-diacylglycerol pyrophosphatase (251 aa).

Residues 4–24 (AGLLFLVMIVIAVVAAGIGYW) form a helical membrane-spanning segment.

Belongs to the Cdh family.

It localises to the cell inner membrane. The enzyme catalyses a CDP-1,2-diacyl-sn-glycerol + H2O = a 1,2-diacyl-sn-glycero-3-phosphate + CMP + 2 H(+). It functions in the pathway phospholipid metabolism; CDP-diacylglycerol degradation; phosphatidate from CDP-diacylglycerol: step 1/1. In Escherichia coli O81 (strain ED1a), this protein is CDP-diacylglycerol pyrophosphatase.